A 450-amino-acid polypeptide reads, in one-letter code: Phosphoglucosamine mutase (450 aa).

Serine 101 (phosphoserine intermediate) is an active-site residue. Mg(2+) is bound by residues serine 101, aspartate 240, aspartate 242, and aspartate 244. Serine 101 is modified (phosphoserine).

It belongs to the phosphohexose mutase family. It depends on Mg(2+) as a cofactor. Post-translationally, activated by phosphorylation.

The catalysed reaction is alpha-D-glucosamine 1-phosphate = D-glucosamine 6-phosphate. In terms of biological role, catalyzes the conversion of glucosamine-6-phosphate to glucosamine-1-phosphate. The sequence is that of Phosphoglucosamine mutase from Streptococcus uberis (strain ATCC BAA-854 / 0140J).